The primary structure comprises 326 residues: Olfactory receptor 8A1 (326 aa).

Topologically, residues 1–45 are extracellular; it reads MGFLSPMHPCRPPTQRRMAAGNHSTVTEFILKGLTKRADLQLPLF. N-linked (GlcNAc...) asparagine glycosylation is present at Asn-22. Residues 46 to 66 traverse the membrane as a helical segment; the sequence is LLFLGIYLVTIVGNLGMITLI. Residues 67-77 lie on the Cytoplasmic side of the membrane; sequence CLNSQLHTPMY. A helical transmembrane segment spans residues 78–100; it reads YFLSNLSLMDLCYSSVITPKMLV. Residues 101 to 116 lie on the Extracellular side of the membrane; sequence NFVSEKNIISYAGCMS. Residues Cys-114 and Cys-195 are joined by a disulfide bond. The helical transmembrane segment at 117–137 threads the bilayer; the sequence is QLYFFLVFVIAECYMLTVMAY. Over 138–150 the chain is Cytoplasmic; the sequence is DRYVAICHPLLYN. A helical transmembrane segment spans residues 151–171; it reads IIMSHHTCLLLVAVVYAIGLI. The Extracellular portion of the chain corresponds to 172–222; sequence GSTIETGLMLKLPYCEHLISHYFCDILPLMKLSCSSTYDVEMTVFFSAGFN. The helical transmembrane segment at 223–243 threads the bilayer; it reads IIVTSLTVLVSYTFILSSILG. The Cytoplasmic segment spans residues 244-260; that stretch reads ISTTEGRSKAFSTCSSH. Residues 261 to 281 form a helical membrane-spanning segment; that stretch reads LAAVGMFYGSTAFMYLKPSTI. Topologically, residues 282-287 are extracellular; that stretch reads SSLTQE. A helical transmembrane segment spans residues 288–308; that stretch reads NVASVFYTTVIPMLNPLIYSL. The Cytoplasmic segment spans residues 309 to 326; sequence RNKEVKAAVQKTLRGKLF.

The protein belongs to the G-protein coupled receptor 1 family.

Its subcellular location is the cell membrane. In terms of biological role, odorant receptor. In Homo sapiens (Human), this protein is Olfactory receptor 8A1 (OR8A1).